The primary structure comprises 673 residues: ATP-dependent zinc metalloprotease FtsH (673 aa).

The Cytoplasmic portion of the chain corresponds to 1–7 (MNGFFKN). A helical membrane pass occupies residues 8-28 (LSLWLVIGLLMVMLFNLFNSP). Topologically, residues 29 to 100 (QGPGQSITFS…DVREPEGTPM (72 aa)) are periplasmic. Residues 101-121 (LMQILISWFPMLLLIAVWIYF) traverse the membrane as a helical segment. At 122–673 (MRQMQSGGGR…DTPEGDDKDR (552 aa)) the chain is on the cytoplasmic side. 194–201 (GPPGTGKT) lines the ATP pocket. Residue H416 coordinates Zn(2+). E417 is a catalytic residue. 2 residues coordinate Zn(2+): H420 and D492. The interval 601-673 (ALKPLKKKDE…DTPEGDDKDR (73 aa)) is disordered. The span at 648 to 660 (STRTATEASTQEV) shows a compositional bias: polar residues. Positions 661-673 (VSKDTPEGDDKDR) are enriched in basic and acidic residues.

In the central section; belongs to the AAA ATPase family. This sequence in the C-terminal section; belongs to the peptidase M41 family. As to quaternary structure, homohexamer. Zn(2+) serves as cofactor.

The protein localises to the cell inner membrane. In terms of biological role, acts as a processive, ATP-dependent zinc metallopeptidase for both cytoplasmic and membrane proteins. Plays a role in the quality control of integral membrane proteins. The sequence is that of ATP-dependent zinc metalloprotease FtsH from Magnetococcus marinus (strain ATCC BAA-1437 / JCM 17883 / MC-1).